Here is a 352-residue protein sequence, read N- to C-terminus: Protein YpbB (352 aa).

As to quaternary structure, interacts with RecS and SSB (ssbA); the 6 C-terminal residues of SSB are required for interaction with YpbB.

It localises to the cytoplasm. The protein resides in the nucleoid. This chain is Protein YpbB (ypbB), found in Bacillus subtilis (strain 168).